The primary structure comprises 1128 residues: Large proline-rich protein BAG6 (1128 aa).

Met1 carries the post-translational modification N-acetylmethionine. The Ubiquitin-like domain maps to 17–92; sequence LEVLVKTLDS…HLVERAPPQT (76 aa). Disordered regions lie at residues 87-126, 185-267, 380-435, 456-523, and 555-598; these read RAPPQTQLPSGASSGTGSASATHGGGPPPGTRGPGASVHD, CRGG…NHPS, VTMT…AASH, IQDS…ALPG, and PGMA…SASD. Low complexity predominate over residues 95-108; sequence PSGASSGTGSASAT. The residue at position 96 (Ser96) is a Phosphoserine. At Thr117 the chain carries Phosphothreonine. A compositionally biased stretch (polar residues) spans 189 to 201; the sequence is SQAQHSQPPSQMP. Repeat unit 1 spans residues 236–265; that stretch reads RASAQSPGLSPSGPAPAGPTPAPETNAPNH. The tract at residues 236–630 is 4 X 29 AA approximate repeats; sequence RASAQSPGLS…MTSPTITVAM (395 aa). The span at 238–247 shows a compositional bias: low complexity; that stretch reads SAQSPGLSPS. Composition is skewed to pro residues over residues 248 to 257 and 388 to 402; these read GPAPAGPTPA and RPPPTPNAEAPPPGP. Residues 403–412 are compositionally biased toward low complexity; it reads GQASSLAPSS. Copy 2 of the repeat occupies 410 to 438; the sequence is PSSTTVESSTEGAPPPGPAPPPAASHPRV. 2 stretches are compositionally biased toward pro residues: residues 422–433 and 502–515; these read APPPGPAPPPAA and PTPPQSRPSHPGGP. Positions 564 to 581 are enriched in low complexity; the sequence is ATASASAGTTNTATTAGP. Tandem repeats lie at residues 569–596 and 602–630. Over residues 583–594 the composition is skewed to pro residues; the sequence is PGGPAQPPPPQP. Disordered stretches follow at residues 648 to 689 and 939 to 1128; these read QTAA…GLGP and VGDP…AEDP. Positions 652-677 are enriched in pro residues; sequence PPAPPPPPPPPPPAPEQQTAPPPGSP. The span at 678–688 shows a compositional bias: gly residues; sequence PGGAGSPGGLG. Phosphoserine occurs at positions 960 and 969. Positions 999 to 1016 are enriched in low complexity; it reads AAAETEPWAAAVPPEWVP. A required for interaction with GET4 region spans residues 1006-1036; it reads WAAAVPPEWVPIIQQDIQSQRKVKPQPPLSD. Residues 1008-1050 carry the Nuclear localization site motif; the sequence is AAVPPEWVPIIQQDIQSQRKVKPQPPLSDAYLSGMPAKRRKTM. Residues 1018–1128 form a sufficient for the delivery of client proteins to the endoplasmic reticulum region; sequence IQQDIQSQRK…NAHRAFAEDP (111 aa). Thr1049 carries the post-translational modification Phosphothreonine. Residues 1054 to 1111 form a BAG-similar domain, required and sufficient for interaction with UBL4A region; it reads GPQLLLSEAVSRAAKAAGARPLTSPESLSRDLEAPEVQESYRQQLRADIQKRLQEDPN. A compositionally biased stretch (low complexity) spans 1062–1072; that stretch reads AVSRAAKAAGA. Phosphoserine is present on residues Ser1077 and Ser1113.

Component of the BAG6/BAT3 complex, also named BAT3 complex, at least composed of BAG6, UBL4A and GET4/TRC35. Interacts with GET4; the interaction is direct and localizes BAG6 in the cytosol. Interacts with UBL4A; the interaction is direct and required for UBL4A protein stability. Interacts with AIFM1. Interacts with HSPA2. Interacts with CTCFL. Interacts with p300/EP300. Interacts (via ubiquitin-like domain) with RNF126; required for BAG6-dependent ubiquitination of proteins mislocalized to the cytosol. Interacts (via ubiquitin-like domain) with SGTA; SGTA competes with RNF126 by binding the same region of BAG6, thereby promoting deubiquitination of BAG6-target proteins and rescuing them from degradation. Interacts with ricin A chain. Interacts with VCP and AMFR; both form the VCP/p97-AMFR/gp78 complex. Interacts with SYVN1. Interacts with USP13; the interaction is direct and may mediate UBL4A deubiquitination. Interacts with ZFAND2B. Interacts with KPNA2. Interacts with UBQLN4. In terms of processing, ricin can induce a cleavage by the caspase CASP3. The released C-terminal peptide induces apoptosis.

It localises to the cytoplasm. The protein localises to the cytosol. Its subcellular location is the nucleus. It is found in the secreted. The protein resides in the extracellular exosome. Its function is as follows. ATP-independent molecular chaperone preventing the aggregation of misfolded and hydrophobic patches-containing proteins. Functions as part of a cytosolic protein quality control complex, the BAG6/BAT3 complex, which maintains these client proteins in a soluble state and participates in their proper delivery to the endoplasmic reticulum or alternatively can promote their sorting to the proteasome where they undergo degradation. The BAG6/BAT3 complex is involved in the post-translational delivery of tail-anchored/type II transmembrane proteins to the endoplasmic reticulum membrane. Recruited to ribosomes, it interacts with the transmembrane region of newly synthesized tail-anchored proteins and together with SGTA and ASNA1 mediates their delivery to the endoplasmic reticulum. Client proteins that cannot be properly delivered to the endoplasmic reticulum are ubiquitinated by RNF126, an E3 ubiquitin-protein ligase associated with BAG6 and are sorted to the proteasome. SGTA which prevents the recruitment of RNF126 to BAG6 may negatively regulate the ubiquitination and the proteasomal degradation of client proteins. Similarly, the BAG6/BAT3 complex also functions as a sorting platform for proteins of the secretory pathway that are mislocalized to the cytosol either delivering them to the proteasome for degradation or to the endoplasmic reticulum. The BAG6/BAT3 complex also plays a role in the endoplasmic reticulum-associated degradation (ERAD), a quality control mechanism that eliminates unwanted proteins of the endoplasmic reticulum through their retrotranslocation to the cytosol and their targeting to the proteasome. It maintains these retrotranslocated proteins in an unfolded yet soluble state condition in the cytosol to ensure their proper delivery to the proteasome. BAG6 is also required for selective ubiquitin-mediated degradation of defective nascent chain polypeptides by the proteasome. In this context, it may participate in the production of antigenic peptides and play a role in antigen presentation in immune response. BAG6 is also involved in endoplasmic reticulum stress-induced pre-emptive quality control, a mechanism that selectively attenuates the translocation of newly synthesized proteins into the endoplasmic reticulum and reroutes them to the cytosol for proteasomal degradation. BAG6 may ensure the proper degradation of these proteins and thereby protects the endoplasmic reticulum from protein overload upon stress. By inhibiting the polyubiquitination and subsequent proteasomal degradation of HSPA2 it may also play a role in the assembly of the synaptonemal complex during spermatogenesis. Also positively regulates apoptosis by interacting with and stabilizing the proapoptotic factor AIFM1. By controlling the steady-state expression of the IGF1R receptor, indirectly regulates the insulin-like growth factor receptor signaling pathway. In terms of biological role, involved in DNA damage-induced apoptosis: following DNA damage, accumulates in the nucleus and forms a complex with p300/EP300, enhancing p300/EP300-mediated p53/TP53 acetylation leading to increase p53/TP53 transcriptional activity. When nuclear, may also act as a component of some chromatin regulator complex that regulates histone 3 'Lys-4' dimethylation (H3K4me2). Functionally, released extracellularly via exosomes, it is a ligand of the natural killer/NK cells receptor NCR3 and stimulates NK cells cytotoxicity. It may thereby trigger NK cells cytotoxicity against neighboring tumor cells and immature myeloid dendritic cells (DC). May mediate ricin-induced apoptosis. The sequence is that of Large proline-rich protein BAG6 from Sus scrofa (Pig).